We begin with the raw amino-acid sequence, 275 residues long: Sulfur carrier protein FdhD (275 aa).

Cysteine 121 serves as the catalytic Cysteine persulfide intermediate. 258–263 (FSKPGR) lines the Mo-bis(molybdopterin guanine dinucleotide) pocket.

This sequence belongs to the FdhD family.

Its subcellular location is the cytoplasm. Required for formate dehydrogenase (FDH) activity. Acts as a sulfur carrier protein that transfers sulfur from IscS to the molybdenum cofactor prior to its insertion into FDH. The polypeptide is Sulfur carrier protein FdhD (Yersinia enterocolitica serotype O:8 / biotype 1B (strain NCTC 13174 / 8081)).